A 384-amino-acid chain; its full sequence is Probable L-tyrosine/L-aspartate decarboxylase (384 aa).

Lys-233 is modified (N6-(pyridoxal phosphate)lysine).

This sequence belongs to the group II decarboxylase family. MfnA subfamily. Pyridoxal 5'-phosphate serves as cofactor.

It carries out the reaction L-tyrosine + H(+) = tyramine + CO2. The catalysed reaction is L-aspartate + H(+) = beta-alanine + CO2. It participates in cofactor biosynthesis; methanofuran biosynthesis. The protein operates within cofactor biosynthesis; coenzyme A biosynthesis. In terms of biological role, catalyzes the decarboxylation of L-tyrosine to produce tyramine for methanofuran biosynthesis. Can also catalyze the decarboxylation of L-aspartate to produce beta-alanine for coenzyme A (CoA) biosynthesis. In Methanococcus maripaludis (strain DSM 14266 / JCM 13030 / NBRC 101832 / S2 / LL), this protein is Probable L-tyrosine/L-aspartate decarboxylase.